The chain runs to 736 residues: 1,4-alpha-glucan branching enzyme GlgB (736 aa).

The active-site Nucleophile is aspartate 419. Catalysis depends on glutamate 472, which acts as the Proton donor.

The protein belongs to the glycosyl hydrolase 13 family. GlgB subfamily. As to quaternary structure, monomer.

The catalysed reaction is Transfers a segment of a (1-&gt;4)-alpha-D-glucan chain to a primary hydroxy group in a similar glucan chain.. The protein operates within glycan biosynthesis; glycogen biosynthesis. Its function is as follows. Catalyzes the formation of the alpha-1,6-glucosidic linkages in glycogen by scission of a 1,4-alpha-linked oligosaccharide from growing alpha-1,4-glucan chains and the subsequent attachment of the oligosaccharide to the alpha-1,6 position. The chain is 1,4-alpha-glucan branching enzyme GlgB from Rhizobium meliloti (strain 1021) (Ensifer meliloti).